We begin with the raw amino-acid sequence, 440 residues long: Cobyrinate a,c-diamide synthase (440 aa).

In terms of domain architecture, GATase cobBQ-type spans 247–428; that stretch reads RIAIAYDAAF…MHLYFPSNPR (182 aa). Residue Cys-329 is the Nucleophile of the active site.

It belongs to the CobB/CbiA family. The cofactor is Mg(2+).

It catalyses the reaction cob(II)yrinate + 2 L-glutamine + 2 ATP + 2 H2O = cob(II)yrinate a,c diamide + 2 L-glutamate + 2 ADP + 2 phosphate + 2 H(+). The protein operates within cofactor biosynthesis; adenosylcobalamin biosynthesis; cob(II)yrinate a,c-diamide from sirohydrochlorin (anaerobic route): step 10/10. In terms of biological role, catalyzes the ATP-dependent amidation of the two carboxylate groups at positions a and c of cobyrinate, using either L-glutamine or ammonia as the nitrogen source. The sequence is that of Cobyrinate a,c-diamide synthase from Picrophilus torridus (strain ATCC 700027 / DSM 9790 / JCM 10055 / NBRC 100828 / KAW 2/3).